Consider the following 30-residue polypeptide: Photosystem I reaction center subunit XII (30 aa).

Residues 7–29 (IYTVLCIALLAGILAIRLGSTLY) traverse the membrane as a helical segment.

Belongs to the PsaM family.

It is found in the plastid. The protein localises to the chloroplast thylakoid membrane. The polypeptide is Photosystem I reaction center subunit XII (Phaeodactylum tricornutum (strain CCAP 1055/1)).